We begin with the raw amino-acid sequence, 234 residues long: MARKTIDSIPEPIALPTEETVQKRIKLKMVDLDAEIAKLNVQSLDSSIQMIRDIDQMNVDAVQTTAALEDQDEQLDKIEANLSNVIDDLNVVSHNITAMEHYCGCGFFRILRAPFKYFRKRERDIIKEEVLEKMTSPKLRRKEESNMMMFTNSSKRRESTGDFMKRLTCDAIEDELERNLMQIDQGLESVKNLAVDMHVQLKLQEPKLNRIEELTETNDFVVEGVNDKVKKLLH.

T-SNARE coiled-coil homology domains are found at residues 37 to 99 (AKLN…ITAM) and 170 to 232 (DAIE…VKKL).

It belongs to the SNAP-25 family. Expressed in intestinal cells.

The protein resides in the cell membrane. T-SNARE protein which regulates the secretion of aex-5 from intestinal cells. Involved in the defecation motor program, which is a coordinated series of three muscle contractions that occurs every 45 seconds. This Caenorhabditis elegans protein is t-SNARE protein aex-4.